The sequence spans 505 residues: Cell division control protein 6 homolog B (505 aa).

Positions 37-72 are disordered; the sequence is KRKMRSDSAAVSGNSVSTPKKLKSHLPSSVPNPGMS. The span at 45 to 54 shows a compositional bias: polar residues; that stretch reads AAVSGNSVST.

It belongs to the CDC6/cdc18 family.

Its subcellular location is the nucleus. May be involved in the initiation of DNA replication. In Arabidopsis thaliana (Mouse-ear cress), this protein is Cell division control protein 6 homolog B.